The sequence spans 509 residues: ATP synthase subunit alpha (509 aa).

169 to 176 is a binding site for ATP; sequence GDRQTGKT.

It belongs to the ATPase alpha/beta chains family. As to quaternary structure, F-type ATPases have 2 components, CF(1) - the catalytic core - and CF(0) - the membrane proton channel. CF(1) has five subunits: alpha(3), beta(3), gamma(1), delta(1), epsilon(1). CF(0) has three main subunits: a(1), b(2) and c(9-12). The alpha and beta chains form an alternating ring which encloses part of the gamma chain. CF(1) is attached to CF(0) by a central stalk formed by the gamma and epsilon chains, while a peripheral stalk is formed by the delta and b chains.

Its subcellular location is the cell inner membrane. It catalyses the reaction ATP + H2O + 4 H(+)(in) = ADP + phosphate + 5 H(+)(out). Functionally, produces ATP from ADP in the presence of a proton gradient across the membrane. The alpha chain is a regulatory subunit. The sequence is that of ATP synthase subunit alpha from Xanthobacter autotrophicus (strain ATCC BAA-1158 / Py2).